Consider the following 120-residue polypeptide: MARIAGVNIPNHQHIWVGLQAIYGIGATRAKVICSAAGIEISTKVKDLTDAEMEKLRDEIAKFTIEGDLRREVTMNIKRLMDLGCYRGFRHRRGLPCRGQRTRTNARTRKGPRKPIAGKK.

The tract at residues 92–120 (RRGLPCRGQRTRTNARTRKGPRKPIAGKK) is disordered.

It belongs to the universal ribosomal protein uS13 family. As to quaternary structure, part of the 30S ribosomal subunit. Forms a loose heterodimer with protein S19. Forms two bridges to the 50S subunit in the 70S ribosome.

Located at the top of the head of the 30S subunit, it contacts several helices of the 16S rRNA. In the 70S ribosome it contacts the 23S rRNA (bridge B1a) and protein L5 of the 50S subunit (bridge B1b), connecting the 2 subunits; these bridges are implicated in subunit movement. Contacts the tRNAs in the A and P-sites. The sequence is that of Small ribosomal subunit protein uS13 from Laribacter hongkongensis (strain HLHK9).